We begin with the raw amino-acid sequence, 351 residues long: Prostaglandin reductase 2 (351 aa).

Residue 99–100 (FY) coordinates substrate. NADP(+) contacts are provided by residues 165–168 (GACG), K192, Y208, N231, 253–259 (CGQISQY), 287–289 (FMV), and N337. Substrate is bound at residue 288-290 (MVL).

This sequence belongs to the NADP-dependent oxidoreductase L4BD family. In terms of assembly, monomer.

It is found in the cytoplasm. It catalyses the reaction 13,14-dihydro-15-oxo-prostaglandin E2 + NAD(+) = 15-oxoprostaglandin E2 + NADH + H(+). The enzyme catalyses 13,14-dihydro-15-oxo-prostaglandin E2 + NADP(+) = 15-oxoprostaglandin E2 + NADPH + H(+). The catalysed reaction is 13,14-dihydro-15-oxo-PGF2alpha + NADP(+) = 15-oxoprostaglandin F2alpha + NADPH + H(+). It carries out the reaction 13,14-dihydro-15-oxo-prostaglandin E1 + NADP(+) = 15-oxoprostaglandin E1 + NADPH + H(+). It catalyses the reaction 13,14-dihydro-15-oxo-prostaglandin F1alpha + NADP(+) = 15-oxoprostaglandin F1alpha + NADPH + H(+). Its function is as follows. Functions as 15-oxo-prostaglandin 13-reductase and acts on 15-keto-PGE1, 15-keto-PGE2, 15-keto-PGE1-alpha and 15-keto-PGE2-alpha with highest activity towards 15-keto-PGE2. Overexpression represses transcriptional activity of PPARG and inhibits adipocyte differentiation. The sequence is that of Prostaglandin reductase 2 from Rattus norvegicus (Rat).